Consider the following 265-residue polypeptide: Glutamate racemase (265 aa).

Substrate-binding positions include Asp-12–Ser-13 and Tyr-44–Gly-45. Cys-75 functions as the Proton donor/acceptor in the catalytic mechanism. Asn-76 to Thr-77 is a substrate binding site. The active-site Proton donor/acceptor is Cys-186. Residue Thr-187 to His-188 participates in substrate binding.

Belongs to the aspartate/glutamate racemases family.

The catalysed reaction is L-glutamate = D-glutamate. The protein operates within cell wall biogenesis; peptidoglycan biosynthesis. Its function is as follows. Provides the (R)-glutamate required for cell wall biosynthesis. In Pseudomonas putida (strain W619), this protein is Glutamate racemase.